Here is an 85-residue protein sequence, read N- to C-terminus: Large ribosomal subunit protein bL27 (85 aa).

The disordered stretch occupies residues 1–20 (MAHKKAGGSTRNGRDSEAKR).

Belongs to the bacterial ribosomal protein bL27 family.

This chain is Large ribosomal subunit protein bL27, found in Proteus mirabilis (strain HI4320).